The sequence spans 338 residues: Lipoate-protein ligase A (338 aa).

The BPL/LPL catalytic domain occupies 29–216 (PTTQRVLFLW…AFFDYFGEQC (188 aa)). Residues Arg-71, 76-79 (GAVF), and Lys-134 contribute to the ATP site. Lys-134 contributes to the (R)-lipoate binding site.

Belongs to the LplA family. In terms of assembly, monomer.

It localises to the cytoplasm. It carries out the reaction L-lysyl-[lipoyl-carrier protein] + (R)-lipoate + ATP = N(6)-[(R)-lipoyl]-L-lysyl-[lipoyl-carrier protein] + AMP + diphosphate + H(+). It participates in protein modification; protein lipoylation via exogenous pathway; protein N(6)-(lipoyl)lysine from lipoate: step 1/2. The protein operates within protein modification; protein lipoylation via exogenous pathway; protein N(6)-(lipoyl)lysine from lipoate: step 2/2. In terms of biological role, catalyzes both the ATP-dependent activation of exogenously supplied lipoate to lipoyl-AMP and the transfer of the activated lipoyl onto the lipoyl domains of lipoate-dependent enzymes. The chain is Lipoate-protein ligase A from Pectobacterium carotovorum subsp. carotovorum (strain PC1).